The following is a 236-amino-acid chain: uncharacterized protein (236 aa).

The HTH gntR-type domain occupies 1–69; sequence MLKYQQIATE…RGSGIFVRKH (69 aa). Positions 29–48 form a DNA-binding region, H-T-H motif; it reads LETLMAQFEVSKSTITKSLE.

This is an uncharacterized protein from Bacillus subtilis (strain 168).